Reading from the N-terminus, the 191-residue chain is Holliday junction branch migration complex subunit RuvA (191 aa).

Residues 1 to 64 are domain I; the sequence is MIGSITGNVE…DNITQLYGFL (64 aa). The segment at 65 to 142 is domain II; the sequence is NRQEQDYFKM…KMPIEETFSI (78 aa). The interval 143 to 146 is flexible linker; the sequence is IEND. The interval 146 to 191 is domain III; sequence DDSLAALISLGYEKLKAFNVIQEIKSKTPDASTQEVIRKALQKLSQ.

It belongs to the RuvA family. In terms of assembly, homotetramer. Forms an RuvA(8)-RuvB(12)-Holliday junction (HJ) complex. HJ DNA is sandwiched between 2 RuvA tetramers; dsDNA enters through RuvA and exits via RuvB. An RuvB hexamer assembles on each DNA strand where it exits the tetramer. Each RuvB hexamer is contacted by two RuvA subunits (via domain III) on 2 adjacent RuvB subunits; this complex drives branch migration. In the full resolvosome a probable DNA-RuvA(4)-RuvB(12)-RuvC(2) complex forms which resolves the HJ.

The protein localises to the cytoplasm. Functionally, the RuvA-RuvB-RuvC complex processes Holliday junction (HJ) DNA during genetic recombination and DNA repair, while the RuvA-RuvB complex plays an important role in the rescue of blocked DNA replication forks via replication fork reversal (RFR). RuvA specifically binds to HJ cruciform DNA, conferring on it an open structure. The RuvB hexamer acts as an ATP-dependent pump, pulling dsDNA into and through the RuvAB complex. HJ branch migration allows RuvC to scan DNA until it finds its consensus sequence, where it cleaves and resolves the cruciform DNA. The chain is Holliday junction branch migration complex subunit RuvA from Ehrlichia ruminantium (strain Gardel).